The primary structure comprises 57 residues: Metallothionein (57 aa).

This sequence belongs to the metallothionein superfamily. Type 14 family.

In terms of biological role, this protein complexes cadmium, zinc and copper. This chain is Metallothionein (mtnA), found in Thermostichus vulcanus (Synechococcus vulcanus).